Reading from the N-terminus, the 152-residue chain is Small ribosomal subunit protein bS6 (152 aa).

The protein belongs to the bacterial ribosomal protein bS6 family.

Functionally, binds together with bS18 to 16S ribosomal RNA. The sequence is that of Small ribosomal subunit protein bS6 from Bdellovibrio bacteriovorus (strain ATCC 15356 / DSM 50701 / NCIMB 9529 / HD100).